The sequence spans 137 residues: Large ribosomal subunit protein uL13 (137 aa).

This sequence belongs to the universal ribosomal protein uL13 family. As to quaternary structure, part of the 50S ribosomal subunit.

Functionally, this protein is one of the early assembly proteins of the 50S ribosomal subunit, although it is not seen to bind rRNA by itself. It is important during the early stages of 50S assembly. In Methanococcus maripaludis (strain DSM 14266 / JCM 13030 / NBRC 101832 / S2 / LL), this protein is Large ribosomal subunit protein uL13.